Consider the following 544-residue polypeptide: Light-independent protochlorophyllide reductase subunit B (544 aa).

Asp36 provides a ligand contact to [4Fe-4S] cluster. Residue Asp286 is the Proton donor of the active site. 421 to 422 (GM) provides a ligand contact to substrate.

This sequence belongs to the ChlB/BchB/BchZ family. In terms of assembly, protochlorophyllide reductase is composed of three subunits; BchL, BchN and BchB. Forms a heterotetramer of two BchB and two BchN subunits. The cofactor is [4Fe-4S] cluster.

It carries out the reaction chlorophyllide a + oxidized 2[4Fe-4S]-[ferredoxin] + 2 ADP + 2 phosphate = protochlorophyllide a + reduced 2[4Fe-4S]-[ferredoxin] + 2 ATP + 2 H2O. Its pathway is porphyrin-containing compound metabolism; bacteriochlorophyll biosynthesis (light-independent). In terms of biological role, component of the dark-operative protochlorophyllide reductase (DPOR) that uses Mg-ATP and reduced ferredoxin to reduce ring D of protochlorophyllide (Pchlide) to form chlorophyllide a (Chlide). This reaction is light-independent. The NB-protein (BchN-BchB) is the catalytic component of the complex. The chain is Light-independent protochlorophyllide reductase subunit B from Chloroflexus aggregans (strain MD-66 / DSM 9485).